Here is a 291-residue protein sequence, read N- to C-terminus: Protease HtpX (291 aa).

The next 2 helical transmembrane spans lie at isoleucine 4–isoleucine 24 and leucine 36–leucine 56. Histidine 143 provides a ligand contact to Zn(2+). The active site involves glutamate 144. Histidine 147 serves as a coordination point for Zn(2+). 2 helical membrane-spanning segments follow: residues glycine 151–serine 171 and phenylalanine 199–tryptophan 219. Position 225 (glutamate 225) interacts with Zn(2+).

It belongs to the peptidase M48B family. Requires Zn(2+) as cofactor.

It localises to the cell inner membrane. The sequence is that of Protease HtpX from Aliivibrio salmonicida (strain LFI1238) (Vibrio salmonicida (strain LFI1238)).